The following is a 305-amino-acid chain: Oxygen-dependent coproporphyrinogen-III oxidase (305 aa).

Residue Ser92 participates in substrate binding. Residues His96 and His106 each contribute to the a divalent metal cation site. Residue His106 is the Proton donor of the active site. 108–110 (NVR) lines the substrate pocket. A divalent metal cation contacts are provided by His145 and His175. Positions 239–274 (YVEFNLLFDRGTLFGLQSGGRAESILISLPPLVRWE) are important for dimerization. 257-259 (GGR) contacts substrate.

This sequence belongs to the aerobic coproporphyrinogen-III oxidase family. As to quaternary structure, homodimer. It depends on a divalent metal cation as a cofactor.

It localises to the cytoplasm. It catalyses the reaction coproporphyrinogen III + O2 + 2 H(+) = protoporphyrinogen IX + 2 CO2 + 2 H2O. The protein operates within porphyrin-containing compound metabolism; protoporphyrin-IX biosynthesis; protoporphyrinogen-IX from coproporphyrinogen-III (O2 route): step 1/1. Its function is as follows. Involved in the heme biosynthesis. Catalyzes the aerobic oxidative decarboxylation of propionate groups of rings A and B of coproporphyrinogen-III to yield the vinyl groups in protoporphyrinogen-IX. The chain is Oxygen-dependent coproporphyrinogen-III oxidase from Xylella fastidiosa (strain Temecula1 / ATCC 700964).